A 565-amino-acid chain; its full sequence is Coiled-coil domain-containing protein 17 (565 aa).

The disordered stretch occupies residues 58–87; sequence IMAQEKSRDQEASTSALKRLTEETAGSPGE. 2 coiled-coil regions span residues 97 to 160 and 219 to 271; these read ARRM…TLGA and LQLQ…KVLS.

The polypeptide is Coiled-coil domain-containing protein 17 (Ccdc17) (Mus musculus (Mouse)).